The chain runs to 584 residues: Poly(A) RNA polymerase protein 2 (584 aa).

Positions 1 to 11 are enriched in polar residues; sequence MGAKSVTASSS. Disordered stretches follow at residues 1–63 and 81–147; these read MGAK…LPKD and EGFD…QELE. Basic residues predominate over residues 12-35; sequence KKIKNRHNGKVKKSKKIKKVRKPQ. Residues 53–63 show a composition bias toward basic and acidic residues; that stretch reads NEQETNKLPKD. The span at 130–139 shows a compositional bias: acidic residues; the sequence is SEDEQAEQEE. Positions 236 and 238 each coordinate Mg(2+). 4 residues coordinate ATP: Gly301, Lys326, Asn431, and Arg435. A PAP-associated domain is found at 371 to 431; sequence NLGVLLIEFF…AIQDPGDESN (61 aa). The disordered stretch occupies residues 525–584; that stretch reads TSTATATTTDDDYEITNPPAKKAKIEEKPESEPAKRNSGETYITVSSEDDDEDGYNPYTL. Residues 547–562 show a composition bias toward basic and acidic residues; that stretch reads AKIEEKPESEPAKRNS.

The protein belongs to the DNA polymerase type-B-like family. Component of the TRAMP complex (also called TRF4 complex) composed of at least HUL4, MTR4, PAP2/TRF4 and either AIR1 or AIR2. Interacts with NOP53 and POL2. Interacts directly with AIR2. It depends on Mg(2+) as a cofactor. Requires Mn(2+) as cofactor.

The protein resides in the nucleus. It carries out the reaction RNA(n) + ATP = RNA(n)-3'-adenine ribonucleotide + diphosphate. Its function is as follows. Catalytic subunit of the TRAMP complex which has a poly(A) RNA polymerase activity and is involved in a post-transcriptional quality control mechanism limiting inappropriate expression of genetic information. Polyadenylation is required for the degradative activity of the exosome on several of its nuclear RNA substrates like cryptic transcripts generated by RNA polymerase II and III, or hypomethylated pre-tRNAi-Met. Polyadenylates RNA processing and degradation intermediates of snRNAs, snoRNAs and mRNAs that accumulate in strains lacking a functional exosome. TRF4 is also required for proper nuclear division in mitosis, DNA damage repair and sister chromatid cohesion. Involved in the regulation of histone mRNA levels. May mediate mitotic chromosome condensation. The chain is Poly(A) RNA polymerase protein 2 (PAP2) from Saccharomyces cerevisiae (strain ATCC 204508 / S288c) (Baker's yeast).